A 255-amino-acid polypeptide reads, in one-letter code: CD320 antigen (255 aa).

The N-terminal stretch at 1–29 (MNGWVARGLARRAAALGLGLRVLLCFGLC) is a signal peptide. Residues 30–203 (LEIAPTPIQT…SVQSGNRNVY (174 aa)) are Extracellular-facing. 2 LDL-receptor class A domains span residues 52-89 (SCPPTNFQCRSDGRCLPLIWRCDVDQDCPDGSDEEECG) and 120-157 (SCPEGELCCPLDGVCIPSTWLCDGHRDCSDYSDELGCG). Disulfide bonds link Cys53-Cys66, Cys60-Cys79, Cys73-Cys88, Cys121-Cys134, Cys128-Cys147, and Cys141-Cys156. Trp71, Asp74, Asp76, Asp78, Asp84, and Glu85 together coordinate Ca(2+). Residues Trp139, Asp142, His144, Asp146, Asp152, and Glu153 each contribute to the Ca(2+) site. Residues Asn177 and Asn183 are each glycosylated (N-linked (GlcNAc...) asparagine). The chain crosses the membrane as a helical span at residues 204–224 (GIIAAVAVLSISLAAGILFAL). Topologically, residues 225-255 (SRLCAQGCLAPLGLLVSMKGSLQPEKKTSVL) are cytoplasmic.

As to quaternary structure, interacts (via LDL-receptor class A domains) with TCN2.

The protein resides in the cell membrane. Functionally, receptor for transcobalamin saturated with cobalamin (TCbl). Plays an important role in cobalamin uptake. Plasma membrane protein that is expressed on follicular dendritic cells (FDC) and mediates interaction with germinal center B cells. Functions as a costimulator to promote B cell responses to antigenic stimuli; promotes B cell differentiation and proliferation. Germinal center-B (GC-B) cells differentiate into memory B-cells and plasma cells (PC) through interaction with T-cells and follicular dendritic cells (FDC). CD320 augments the proliferation of PC precursors generated by IL-10. The sequence is that of CD320 antigen (CD320) from Bos taurus (Bovine).